We begin with the raw amino-acid sequence, 212 residues long: Pyridoxine/pyridoxamine 5'-phosphate oxidase (212 aa).

Residues Arg-8–Tyr-11 and Lys-66 each bind substrate. Residues Arg-61–Lys-66, Phe-76–Thr-77, Arg-82, Lys-83, and Gln-105 contribute to the FMN site. The substrate site is built by Tyr-123, Arg-127, and Ser-131. FMN-binding positions include Gln-140 to Ser-141 and Trp-185. Arg-191 to His-193 provides a ligand contact to substrate. Arg-195 provides a ligand contact to FMN.

It belongs to the pyridoxamine 5'-phosphate oxidase family. In terms of assembly, homodimer. Requires FMN as cofactor.

It carries out the reaction pyridoxamine 5'-phosphate + O2 + H2O = pyridoxal 5'-phosphate + H2O2 + NH4(+). The catalysed reaction is pyridoxine 5'-phosphate + O2 = pyridoxal 5'-phosphate + H2O2. Its pathway is cofactor metabolism; pyridoxal 5'-phosphate salvage; pyridoxal 5'-phosphate from pyridoxamine 5'-phosphate: step 1/1. The protein operates within cofactor metabolism; pyridoxal 5'-phosphate salvage; pyridoxal 5'-phosphate from pyridoxine 5'-phosphate: step 1/1. Functionally, catalyzes the oxidation of either pyridoxine 5'-phosphate (PNP) or pyridoxamine 5'-phosphate (PMP) into pyridoxal 5'-phosphate (PLP). This chain is Pyridoxine/pyridoxamine 5'-phosphate oxidase, found in Shewanella baltica (strain OS223).